A 271-amino-acid polypeptide reads, in one-letter code: D-methionine-binding lipoprotein MetQ (271 aa).

The N-terminal stretch at 1–22 (MAFKFKTFAAVGALIGSLALAG) is a signal peptide. Cys-23 carries the N-palmitoyl cysteine lipid modification. Residue Cys-23 is the site of S-diacylglycerol cysteine attachment.

This sequence belongs to the NlpA lipoprotein family.

It localises to the cell membrane. Functionally, this protein is a component of a D-methionine permease, a binding protein-dependent, ATP-driven transport system. This chain is D-methionine-binding lipoprotein MetQ (metQ), found in Salmonella typhimurium (strain LT2 / SGSC1412 / ATCC 700720).